The sequence spans 112 residues: Integration host factor subunit alpha (112 aa).

This sequence belongs to the bacterial histone-like protein family. Heterodimer of an alpha and a beta chain.

In terms of biological role, this protein is one of the two subunits of integration host factor, a specific DNA-binding protein that functions in genetic recombination as well as in transcriptional and translational control. This chain is Integration host factor subunit alpha, found in Agrobacterium fabrum (strain C58 / ATCC 33970) (Agrobacterium tumefaciens (strain C58)).